The sequence spans 170 residues: Adenine phosphoribosyltransferase (170 aa).

The protein belongs to the purine/pyrimidine phosphoribosyltransferase family. As to quaternary structure, homodimer.

Its subcellular location is the cytoplasm. It carries out the reaction AMP + diphosphate = 5-phospho-alpha-D-ribose 1-diphosphate + adenine. It functions in the pathway purine metabolism; AMP biosynthesis via salvage pathway; AMP from adenine: step 1/1. Functionally, catalyzes a salvage reaction resulting in the formation of AMP, that is energically less costly than de novo synthesis. The polypeptide is Adenine phosphoribosyltransferase (Oceanobacillus iheyensis (strain DSM 14371 / CIP 107618 / JCM 11309 / KCTC 3954 / HTE831)).